An 80-amino-acid chain; its full sequence is Acyl carrier protein (80 aa).

In terms of domain architecture, Carrier spans Glu-4–Gln-79. Residue Ser-39 is modified to O-(pantetheine 4'-phosphoryl)serine.

The protein belongs to the acyl carrier protein (ACP) family. 4'-phosphopantetheine is transferred from CoA to a specific serine of apo-ACP by AcpS. This modification is essential for activity because fatty acids are bound in thioester linkage to the sulfhydryl of the prosthetic group.

The protein localises to the cytoplasm. It participates in lipid metabolism; fatty acid biosynthesis. Carrier of the growing fatty acid chain in fatty acid biosynthesis. The polypeptide is Acyl carrier protein (Synechococcus sp. (strain CC9902)).